A 259-amino-acid chain; its full sequence is DNA-directed RNA polymerase subunit Rpo3 (259 aa).

Belongs to the archaeal Rpo3/eukaryotic RPB3 RNA polymerase subunit family. Part of the RNA polymerase complex.

The protein resides in the cytoplasm. The enzyme catalyses RNA(n) + a ribonucleoside 5'-triphosphate = RNA(n+1) + diphosphate. DNA-dependent RNA polymerase (RNAP) catalyzes the transcription of DNA into RNA using the four ribonucleoside triphosphates as substrates. This is DNA-directed RNA polymerase subunit Rpo3 from Thermococcus kodakarensis (strain ATCC BAA-918 / JCM 12380 / KOD1) (Pyrococcus kodakaraensis (strain KOD1)).